A 944-amino-acid polypeptide reads, in one-letter code: Isoleucine--tRNA ligase (944 aa).

Residues 58–68 (PYANGSIHIGH) carry the 'HIGH' region motif. E563 is a binding site for L-isoleucyl-5'-AMP. The short motif at 604-608 (KMSKS) is the 'KMSKS' region element. An ATP-binding site is contributed by K607. Zn(2+) is bound by residues C907, C910, C927, and C930.

It belongs to the class-I aminoacyl-tRNA synthetase family. IleS type 1 subfamily. In terms of assembly, monomer. Requires Zn(2+) as cofactor.

The protein localises to the cytoplasm. It carries out the reaction tRNA(Ile) + L-isoleucine + ATP = L-isoleucyl-tRNA(Ile) + AMP + diphosphate. Its function is as follows. Catalyzes the attachment of isoleucine to tRNA(Ile). As IleRS can inadvertently accommodate and process structurally similar amino acids such as valine, to avoid such errors it has two additional distinct tRNA(Ile)-dependent editing activities. One activity is designated as 'pretransfer' editing and involves the hydrolysis of activated Val-AMP. The other activity is designated 'posttransfer' editing and involves deacylation of mischarged Val-tRNA(Ile). In Salmonella paratyphi A (strain ATCC 9150 / SARB42), this protein is Isoleucine--tRNA ligase.